We begin with the raw amino-acid sequence, 509 residues long: tRNA-2-methylthio-N(6)-dimethylallyladenosine synthase (509 aa).

Over residues 1 to 15 (MNEQQRLASQQVNSS) the composition is skewed to polar residues. Positions 1-23 (MNEQQRLASQQVNSSTKKEEKDY) are disordered. The MTTase N-terminal domain maps to 66–184 (RKFYIRTYGC…LPYILKDAMF (119 aa)). Cys75, Cys111, Cys145, Cys221, Cys225, and Cys228 together coordinate [4Fe-4S] cluster. Residues 207–437 (RRGDIKAWVN…NALVNKLAIE (231 aa)) enclose the Radical SAM core domain. Positions 440 to 503 (DRYKGQIVEV…TWSLNGELVE (64 aa)) constitute a TRAM domain.

The protein belongs to the methylthiotransferase family. MiaB subfamily. Monomer. Requires [4Fe-4S] cluster as cofactor.

Its subcellular location is the cytoplasm. The enzyme catalyses N(6)-dimethylallyladenosine(37) in tRNA + (sulfur carrier)-SH + AH2 + 2 S-adenosyl-L-methionine = 2-methylsulfanyl-N(6)-dimethylallyladenosine(37) in tRNA + (sulfur carrier)-H + 5'-deoxyadenosine + L-methionine + A + S-adenosyl-L-homocysteine + 2 H(+). Its function is as follows. Catalyzes the methylthiolation of N6-(dimethylallyl)adenosine (i(6)A), leading to the formation of 2-methylthio-N6-(dimethylallyl)adenosine (ms(2)i(6)A) at position 37 in tRNAs that read codons beginning with uridine. This chain is tRNA-2-methylthio-N(6)-dimethylallyladenosine synthase, found in Bacillus anthracis.